The primary structure comprises 870 residues: Ribonucleoside-diphosphate reductase large subunit (870 aa).

An ATP-cone domain is found at 16 to 110; sequence MYVVKRDGTK…VSNLHKQTSK (95 aa). Residues 20-21, 26-32, Thr-71, and Asp-75 each bind ATP; these read KR and ENVSFDK. Ser-235 serves as a coordination point for GDP. Cys-236 and Cys-463 are joined by a disulfide. DTTP contacts are provided by residues 244–246, Lys-261, Arg-274, and 281–282; these read DSI and RG. A GDP-binding site is contributed by Asn-446. Asn-446 functions as the Proton acceptor in the catalytic mechanism. Cys-448 (cysteine radical intermediate) is an active-site residue. Residues Glu-450 and 632–635 contribute to the GDP site; that span reads TAST. Glu-450 acts as the Proton acceptor in catalysis. Residues 789–854 are disordered; the sequence is KPVENNINST…NNNEDDLANY (66 aa). The segment covering 796–811 has biased composition (low complexity); sequence NSTTPLKTPTKTPNSS. Residues 812–831 show a composition bias toward polar residues; that stretch reads NRISTSPTNNLTSPIRFNIT. Residues 832–844 are compositionally biased toward low complexity; the sequence is QQQQQQQQQQQQQ.

This sequence belongs to the ribonucleoside diphosphate reductase large chain family. In terms of assembly, heterodimer of a large and a small subunit.

It is found in the cytoplasm. It catalyses the reaction a 2'-deoxyribonucleoside 5'-diphosphate + [thioredoxin]-disulfide + H2O = a ribonucleoside 5'-diphosphate + [thioredoxin]-dithiol. Its activity is regulated as follows. Under complex allosteric control mediated by deoxynucleoside triphosphates and ATP binding to separate specificity and activation sites on the large subunit. The type of nucleotide bound at the specificity site determines substrate preference. It seems probable that ATP makes the enzyme reduce CDP and UDP, dGTP favors ADP reduction and dTTP favors GDP reduction. Stimulated by ATP and inhibited by dATP binding to the activity site. In terms of biological role, provides the precursors necessary for DNA synthesis. Catalyzes the biosynthesis of deoxyribonucleotides from the corresponding ribonucleotides. This is Ribonucleoside-diphosphate reductase large subunit (rnrA) from Dictyostelium discoideum (Social amoeba).